A 138-amino-acid chain; its full sequence is Nucleoside diphosphate kinase (138 aa).

ATP contacts are provided by Lys-12, Tyr-60, Arg-88, Thr-94, Arg-105, and Asn-115. His-118 serves as the catalytic Pros-phosphohistidine intermediate.

The protein belongs to the NDK family. Homotetramer. It depends on Mg(2+) as a cofactor.

Its subcellular location is the cytoplasm. The enzyme catalyses a 2'-deoxyribonucleoside 5'-diphosphate + ATP = a 2'-deoxyribonucleoside 5'-triphosphate + ADP. It carries out the reaction a ribonucleoside 5'-diphosphate + ATP = a ribonucleoside 5'-triphosphate + ADP. Functionally, major role in the synthesis of nucleoside triphosphates other than ATP. The ATP gamma phosphate is transferred to the NDP beta phosphate via a ping-pong mechanism, using a phosphorylated active-site intermediate. This chain is Nucleoside diphosphate kinase, found in Cutibacterium acnes (strain DSM 16379 / KPA171202) (Propionibacterium acnes).